A 446-amino-acid chain; its full sequence is FAD-dependent monooxygenase eupB (446 aa).

Residues 10–30 (EPHIAIVGGGIVGVILTLGLL) traverse the membrane as a helical segment. The N-linked (GlcNAc...) asparagine glycan is linked to Asn33. Residues Glu40, Ala53, and Arg125 each contribute to the FAD site. Catalysis depends on residues Arg206 and Tyr239. A glycan (N-linked (GlcNAc...) asparagine) is linked at Asn243. 2 residues coordinate FAD: Asp322 and Ala335. Asn395 is a glycosylation site (N-linked (GlcNAc...) asparagine).

It belongs to the paxM FAD-dependent monooxygenase family. FAD serves as cofactor.

Its subcellular location is the membrane. The protein operates within secondary metabolite biosynthesis; terpenoid biosynthesis. In terms of biological role, FAD-dependent monooxygenase; part of the gene cluster that mediates the biosynthesis of eupenifeldin, a bistropolone meroterpenoid that acts as an antitumor agent. The first step of eupenifeldin biosynthesis is the biosynthesis of 3-methylorcinaldehyde performed by the non-reducing polyketide synthase eupA. Oxidative dearomatization of 3-methylorcinaldehyde likely catalyzed by the FAD-dependent monooxygenase eupB is followed by oxidative ring expansion by the 2-oxoglutarate-dependent dioxygenase eupC to provide the first tropolone metabolite, tropolone stipitaldehyde. In parallel, generation of sesquiterpene alpha-humulene from farnesylpyrophosphate (FPP) is catalyzed by the terpene cyclase eupE. The cytochrome P450 monooxygenase eupD then hydroxylates humulene to humulenol. The putative Diels-Alderase eupF probably catalyzes the formation of the tropolone-humulene skeleton by linking humulenol and the polyketide moiety. The short-chain dehydrogenase/reductase eupG and the flavin-dependent monooxygenase eupH are also essential for eupenifeldin biosynthesis and are likely the additional decorating enzymes of the tropolone-humulene skeleton to produce final eupenifeldin or derivatives. This Phoma sp protein is FAD-dependent monooxygenase eupB.